We begin with the raw amino-acid sequence, 222 residues long: Urease accessory protein UreF (222 aa).

The protein belongs to the UreF family. In terms of assembly, ureD, UreF and UreG form a complex that acts as a GTP-hydrolysis-dependent molecular chaperone, activating the urease apoprotein by helping to assemble the nickel containing metallocenter of UreC. The UreE protein probably delivers the nickel.

It localises to the cytoplasm. Its function is as follows. Required for maturation of urease via the functional incorporation of the urease nickel metallocenter. The chain is Urease accessory protein UreF from Hahella chejuensis (strain KCTC 2396).